The following is a 366-amino-acid chain: MAGSVFGNIFKISTWGESHGEGLGVVIDGCPAGLPLCEKDIQEQLDRRKPGQSKFTTPRKEDDEVHILSGVFEGKTTGTPISLAVYNKTQRSADYSEIANYYRPGHADYTFDEKFGFRDYRGGGRSSGRETIGRVAAGAIAMKILKELGINITAYAKEIGGIGIDYDKFDIAERDNNAFNMPDKEAAEKVKAFAESKMSVGDSIGGVIECRVTGMMTGIGNPTFEKLDANLAKAIMSIGAVKGFEIGDGFEAAKVTGKYNNDEFVMKDGRVGKLTNHSGGVLGGISDGDEIVFRAAVKPTPSISALQETVNKQGEDIEVSIKGRHDPMIVPRAVVVVEAMTALTLVDLIFDNMTARMDRVKEFYRK.

Position 48 (Arg48) interacts with NADP(+). Residues Arg125 to Ser127, Gly283, Lys298 to Ser302, and Arg324 each bind FMN.

Belongs to the chorismate synthase family. As to quaternary structure, homotetramer. It depends on FMNH2 as a cofactor.

It catalyses the reaction 5-O-(1-carboxyvinyl)-3-phosphoshikimate = chorismate + phosphate. It participates in metabolic intermediate biosynthesis; chorismate biosynthesis; chorismate from D-erythrose 4-phosphate and phosphoenolpyruvate: step 7/7. Catalyzes the anti-1,4-elimination of the C-3 phosphate and the C-6 proR hydrogen from 5-enolpyruvylshikimate-3-phosphate (EPSP) to yield chorismate, which is the branch point compound that serves as the starting substrate for the three terminal pathways of aromatic amino acid biosynthesis. This reaction introduces a second double bond into the aromatic ring system. The sequence is that of Chorismate synthase from Lachnospira eligens (strain ATCC 27750 / DSM 3376 / VPI C15-48 / C15-B4) (Eubacterium eligens).